The following is a 222-amino-acid chain: ATP-dependent Clp protease proteolytic subunit 1 (222 aa).

The active-site Nucleophile is the S121. H146 is a catalytic residue.

It belongs to the peptidase S14 family. Fourteen ClpP subunits assemble into 2 heptameric rings which stack back to back to give a disk-like structure with a central cavity, resembling the structure of eukaryotic proteasomes.

It is found in the cytoplasm. It carries out the reaction Hydrolysis of proteins to small peptides in the presence of ATP and magnesium. alpha-casein is the usual test substrate. In the absence of ATP, only oligopeptides shorter than five residues are hydrolyzed (such as succinyl-Leu-Tyr-|-NHMec, and Leu-Tyr-Leu-|-Tyr-Trp, in which cleavage of the -Tyr-|-Leu- and -Tyr-|-Trp bonds also occurs).. Its function is as follows. Cleaves peptides in various proteins in a process that requires ATP hydrolysis. Has a chymotrypsin-like activity. Plays a major role in the degradation of misfolded proteins. This is ATP-dependent Clp protease proteolytic subunit 1 from Thermobifida fusca (strain YX).